A 352-amino-acid polypeptide reads, in one-letter code: RAD51-associated protein 1 (352 aa).

The segment covering 1–10 has biased composition (basic residues); the sequence is MVRPVRHKKP. Disordered stretches follow at residues 1 to 78 and 115 to 144; these read MVRP…TFSI and TNVQ…HISN. 2 positions are modified to phosphoserine: S19 and S21. An interaction with DNA region spans residues 30–49; that stretch reads VPLNKKSRTAPKELKQDKPK. Residues 39 to 72 show a composition bias toward basic and acidic residues; it reads APKELKQDKPKPNLNNLRKEEIPVQEKTPKKRLP. T66 is subject to Phosphothreonine. Residues S120 and S124 each carry the phosphoserine modification. A compositionally biased stretch (polar residues) spans 132–144; it reads KIETMNKSPHISN. The SIM motif motif lies at 154–159; it reads LDKITV. The interval 162–323 is disordered; it reads DVGGVQGKRK…RSSSSPLVVV (162 aa). Acidic residues predominate over residues 188–221; sequence SDGDSANDTEPDFAPGEDSEDDSDFCESEDNDED. The segment covering 229-247 has biased composition (basic and acidic residues); the sequence is VKEIKKKEVKVKSPVEKKE. Positions 243 to 304 are interaction with DNA; it reads VEKKEKKSKS…PSAESKKPKW (62 aa). Residue K251 forms a Glycyl lysine isopeptide (Lys-Gly) (interchain with G-Cter in ubiquitin; alternate) linkage. K269 is covalently cross-linked (Glycyl lysine isopeptide (Lys-Gly) (interchain with G-Cter in SUMO)). Residues 270–284 show a composition bias toward polar residues; that stretch reads SESQSLPKKVSLSSD. Phosphoserine is present on S280. The WVPP motif signature appears at 304–307; that stretch reads WVPP. A compositionally biased stretch (low complexity) spans 306 to 323; sequence PPAASGGSRSSSSPLVVV. Residues 313-352 are interaction with RAD51; that stretch reads SRSSSSPLVVVSVKSPNQSLRLGLSRLARVKPLHPNATST. S327 bears the Phosphoserine mark.

As to quaternary structure, monomer; elongated monodisperse monomer. Interacts (via C-terminal region) with RAD51; the interaction is direct. Interacts (via SIM motif) with WDR48/UAF1; WDR48/UAF1 and RAD51AP1 cooperate together to stimulate RAD51-mediated homologous recombination (HR). Interacts (via WVPP motif) with DMC1; the interaction is direct. Interacts with PALB2. Interacts with RAD52. In terms of assembly, does not interact with DMC1; lack of interaction is caused by the absence of the WVPP motif in this isoform. In terms of processing, sumoylation with SUMO2/3 by NSMCE2/MMS21 promotes stabilization, possibly by preventing ubiquitination. Sumoylation is required for alternative lengthening of telomeres (ALT) pathway. Highly expressed in testis and thymus. Lower levels in colon and small intestine. Little or no expression in spleen, prostate, ovary and peripheral blood leukocytes.

It localises to the chromosome. The protein localises to the nucleus. Its subcellular location is the telomere. In terms of biological role, structure-specific DNA-binding protein involved in DNA repair by promoting RAD51-mediated homologous recombination. Acts by stimulating D-Loop formation by RAD51: specifically enhances joint molecule formation through its structure-specific DNA interaction and its interaction with RAD51. Binds single-stranded DNA (ssDNA), double-stranded DNA (dsDNA) and secondary DNA structures, such as D-loop structures: has a strong preference for branched-DNA structures that are obligatory intermediates during joint molecule formation. Cooperates with WDR48/UAF1 to stimulate RAD51-mediated homologous recombination: both WDR48/UAF1 and RAD51AP1 have coordinated role in DNA-binding during homologous recombination and DNA repair. WDR48/UAF1 and RAD51AP1 also have a coordinated role in DNA-binding to promote USP1-mediated deubiquitination of FANCD2. Also involved in meiosis by promoting DMC1-mediated homologous meiotic recombination. Key mediator of alternative lengthening of telomeres (ALT) pathway, a homology-directed repair mechanism of telomere elongation that controls proliferation in aggressive cancers, by stimulating homologous recombination. May also bind RNA; additional evidences are however required to confirm RNA-binding in vivo. The polypeptide is RAD51-associated protein 1 (Homo sapiens (Human)).